A 358-amino-acid polypeptide reads, in one-letter code: Protein-L-isoaspartate O-methyltransferase domain-containing protein 1 (358 aa).

The N-myristoyl glycine moiety is linked to residue G2. S64 is an active-site residue. 3 adoMet binding motif regions span residues L85–L94, Y160–Y164, and L181–I191. A BC-box region spans residues V240–Y250. The segment at P300–I339 is disordered. Over residues D302–D318 the composition is skewed to acidic residues. Residues K319–I339 show a composition bias toward basic and acidic residues. The CUL-box stretch occupies residues L342–P345.

Belongs to the methyltransferase superfamily. L-isoaspartyl/D-aspartyl protein methyltransferase family. In terms of assembly, component of the probable ECS(PCMTD1) E3 ubiquitin-protein ligase complex, at least composed of CUL5, ELOB, ELOC, RBX2 and PCMTD1.

It localises to the cytoplasm. It is found in the membrane. Functionally, substrate recognition component of an ECS (Elongin BC-CUL5-SOCS-box protein) E3 ubiquitin ligase complex which mediates the ubiquitination and subsequent proteasomal degradation of target proteins. Specifically binds to the methyltransferase cofactor S-adenosylmethionine (AdoMet) via the N-terminal AdoMet binding motif, but does not display methyltransferase activity. May provide an alternate maintenance pathway for modified proteins by acting as a damage-specific E3 ubiquitin ligase adaptor protein. This Gallus gallus (Chicken) protein is Protein-L-isoaspartate O-methyltransferase domain-containing protein 1 (PCMTD1).